The sequence spans 120 residues: Large ribosomal subunit protein uL18 (120 aa).

This sequence belongs to the universal ribosomal protein uL18 family. In terms of assembly, part of the 50S ribosomal subunit; part of the 5S rRNA/L5/L18/L25 subcomplex. Contacts the 5S and 23S rRNAs.

Functionally, this is one of the proteins that bind and probably mediate the attachment of the 5S RNA into the large ribosomal subunit, where it forms part of the central protuberance. This chain is Large ribosomal subunit protein uL18, found in Bartonella bacilliformis (strain ATCC 35685 / KC583 / Herrer 020/F12,63).